The chain runs to 291 residues: uncharacterized protein (291 aa).

The 192-residue stretch at 5-196 folds into the PNPLA domain; it reads GVFSGGGVKG…LSNFPIWLFS (192 aa). Residues 9–14 carry the GXGXXG motif; it reads GGGVKG. A helical membrane pass occupies residues 34–50; it reads VAGTSAGAIIAAFIASG. Positions 36 to 40 match the GXSXG motif; the sequence is GTSAG. Catalysis depends on S38, which acts as the Nucleophile. The active-site Proton acceptor is the D183. The short motif at 183–185 is the DGA/G element; the sequence is DGG.

The protein localises to the cell membrane. In terms of biological role, probable lipid hydrolase. This is an uncharacterized protein from Bacillus subtilis (strain 168).